We begin with the raw amino-acid sequence, 495 residues long: MEHTEKSKGPAEKGLLGKIRRYLSKRPLPSPTDRKKFDHDFAISTSFHGIHNIAQNQNKVRKVIWLSVVLGSVSLLVWQIYSRLVNYFMWPTTTSIEVQYVEKIEFPAVTFCNLNRFQTEAVSRFGIIFFLWDIVSKVLRLQEISGNNTGSPEALDFVASHRNFSITEFVKNNGFYLNHDTLVHCEFFGKTCDPKDFKHVFTEYGNCFTFNYGENVQSKNKVSVSGRGLKLLLDVHQEEFTDNPVPGFADAGVIFVIHSPKKEPQFDGLGLSSPVGMHARVTIRQLKTIHQEYPWGECNPDIKLRNFTTYSTYGCLKECKAKHIQRLCGCLPFLLPGNGVECDLLKYYNCVSPILDHIERKGLCTMGTHNSSCPVPCEETEYPATIAYSTFPSQRATKFLAKKLNQSQEYIRENLVNIEINYSDLNYKITQQQKAVSVPELLADVGGQLGLFCGASLITIIEIIEYLFTSFYWVFIFFLLKILEMIQRTSPPQTV.

Residues 1–30 (MEHTEKSKGPAEKGLLGKIRRYLSKRPLPS) are binds the plasma membrane and stabilizes the channel in the closed state. Over 1-61 (MEHTEKSKGP…NIAQNQNKVR (61 aa)) the chain is Cytoplasmic. A helical transmembrane segment spans residues 62-82 (KVIWLSVVLGSVSLLVWQIYS). Topologically, residues 83 to 459 (RLVNYFMWPT…GLFCGASLIT (377 aa)) are extracellular. 6 cysteine pairs are disulfide-bonded: C112/C207, C185/C192, C298/C377, C315/C373, C328/C350, and C330/C342. N147 and N163 each carry an N-linked (GlcNAc...) asparagine glycan. A glycan (N-linked (GlcNAc...) asparagine) is linked at N306. N370, N405, and N421 each carry an N-linked (GlcNAc...) asparagine glycan. The GAS motif; ion selectivity filter signature appears at 454 to 456 (GAS). A helical membrane pass occupies residues 460–480 (IIEIIEYLFTSFYWVFIFFLL). The Cytoplasmic segment spans residues 481–495 (KILEMIQRTSPPQTV).

The protein belongs to the amiloride-sensitive sodium channel (TC 1.A.6) family. ASIC5 subfamily. In terms of assembly, forms homotrimeric channels. In terms of tissue distribution, expressed by cholangiocytes (at protein level). Detected in brain, liver, duodenum, jejunum, ileum and testis.

Its subcellular location is the apical cell membrane. The protein resides in the cell membrane. The enzyme catalyses Na(+)(in) = Na(+)(out). It carries out the reaction Li(+)(in) = Li(+)(out). The catalysed reaction is K(+)(in) = K(+)(out). It catalyses the reaction H(+)(in) = H(+)(out). Inhibited by the diuretic drug amiloride. Inhibited by diminazene. Inhibited by extracellular Ca(2+). Forms bile acid-gated sodium channels and may play a role in bile acid-dependent absorption and secretion by epithelial cells of the bile ducts. Displays high selectivity for sodium ions but can also permit the permeation of other cations. The gating could be indirect and the consequence of alterations of the membrane environment of the channel by bile acids. As a sodium channel of type II unipolar brush cells of the vestibulocerebellum, controlling the electrical activity of these cells, could play a role in motor coordination and balance. This is Bile acid-sensitive ion channel from Rattus norvegicus (Rat).